The primary structure comprises 546 residues: Chaperonin GroEL (546 aa).

Residues 29 to 32 (TMGP), lysine 50, 86 to 90 (DGTTT), glycine 414, and aspartate 492 each bind ATP.

It belongs to the chaperonin (HSP60) family. Forms a cylinder of 14 subunits composed of two heptameric rings stacked back-to-back. Interacts with the co-chaperonin GroES.

It localises to the cytoplasm. The catalysed reaction is ATP + H2O + a folded polypeptide = ADP + phosphate + an unfolded polypeptide.. Its function is as follows. Together with its co-chaperonin GroES, plays an essential role in assisting protein folding. The GroEL-GroES system forms a nano-cage that allows encapsulation of the non-native substrate proteins and provides a physical environment optimized to promote and accelerate protein folding. In Helicobacter pylori (strain Shi470), this protein is Chaperonin GroEL.